Here is a 507-residue protein sequence, read N- to C-terminus: DNA damage-binding protein 2 (507 aa).

The segment at 1–32 (MAPVNQPKDKKHEKAHEHRSEEAKSAGKRKLD) is disordered. The span at 7 to 32 (PKDKKHEKAHEHRSEEAKSAGKRKLD) shows a compositional bias: basic and acidic residues. Required for interaction with DDB1 stretches follow at residues 81–92 (SIVHYVYQNMLG) and 100–111 (RQCLQLPFLRSL). 5 WD repeats span residues 129–164 (CLEW…CFIK), 172–207 (LGDI…VQVI), 223–258 (WYCS…IWKL), 264–307 (KVTH…VLPH), and 310–350 (PVNA…LIPH). The short motif at 276–294 (WLLATASVDQTVKIWDLRN) is the DWD box element. Positions 355 to 357 (FQH) are photolesion recognition. WD repeat units lie at residues 364 to 407 (TWHP…VCQL) and 417 to 441 (SLNK…IWSR). The segment at 459–487 (QGIGSRSLSRRGGQRQANPGTSKLKAKLL) is disordered.

Belongs to the WD repeat DDB2/WDR76 family. Component of the UV-DDB complex which includes DDB1 and DDB2. Component of the DCX (DDB1-CUL4-X-box) E3 ubiquitin-protein ligase complex DDB1-CUL4-ROC1 (also known as CUL4-DDB-ROC1 and CUL4-DDB-RBX1), which includes CUL4A or CUL4B, DDB1, DDB2 and RBX1. DDB2 may function as the substrate recognition module within this complex. A large number of other DCX complexes may also exist in which an alternate substrate targeting subunit replaces DDB2. These targeting subunits are generally known as DCAF (DDB1- and CUL4-associated factor) or CDW (CUL4-DDB1-associated WD40-repeat) proteins.

It localises to the nucleus. It is found in the chromosome. The protein operates within protein modification; protein ubiquitination. Its function is as follows. Protein, which is both involved in DNA repair and protein ubiquitination, as part of the UV-DDB complex and DCX (DDB1-CUL4-X-box) complexes, respectively. Core component of the UV-DDB complex (UV-damaged DNA-binding protein complex), a complex that recognizes UV-induced DNA damage and recruit proteins of the nucleotide excision repair pathway (the NER pathway) to initiate DNA repair. The UV-DDB complex preferentially binds to cyclobutane pyrimidine dimers (CPD), 6-4 photoproducts (6-4 PP), apurinic sites and short mismatches. Also functions as the substrate recognition module for the DCX (DDB2-CUL4-X-box) E3 ubiquitin-protein ligase complex DDB2-CUL4-ROC1 (also known as CUL4-DDB-ROC1 and CUL4-DDB-RBX1). The DDB2-CUL4-ROC1 complex may ubiquitinate histone H2A, histone H3 and histone H4 at sites of UV-induced DNA damage. The ubiquitination of histones may facilitate their removal from the nucleosome and promote subsequent DNA repair. This chain is DNA damage-binding protein 2 (DDB2), found in Gallus gallus (Chicken).